The following is a 505-amino-acid chain: Catalase (505 aa).

Residues M1–A25 are disordered. Residues H56 and N129 contribute to the active site. Residue Y339 participates in heme binding.

It belongs to the catalase family. As to quaternary structure, homodimer. Heme is required as a cofactor.

It carries out the reaction 2 H2O2 = O2 + 2 H2O. Decomposes hydrogen peroxide into water and oxygen; serves to protect cells from the toxic effects of hydrogen peroxide. The protein is Catalase (katA) of Staphylococcus warneri.